Reading from the N-terminus, the 257-residue chain is Imidazole glycerol phosphate synthase subunit HisF (257 aa).

Catalysis depends on residues aspartate 12 and aspartate 131.

It belongs to the HisA/HisF family. In terms of assembly, heterodimer of HisH and HisF.

Its subcellular location is the cytoplasm. It carries out the reaction 5-[(5-phospho-1-deoxy-D-ribulos-1-ylimino)methylamino]-1-(5-phospho-beta-D-ribosyl)imidazole-4-carboxamide + L-glutamine = D-erythro-1-(imidazol-4-yl)glycerol 3-phosphate + 5-amino-1-(5-phospho-beta-D-ribosyl)imidazole-4-carboxamide + L-glutamate + H(+). Its pathway is amino-acid biosynthesis; L-histidine biosynthesis; L-histidine from 5-phospho-alpha-D-ribose 1-diphosphate: step 5/9. Functionally, IGPS catalyzes the conversion of PRFAR and glutamine to IGP, AICAR and glutamate. The HisF subunit catalyzes the cyclization activity that produces IGP and AICAR from PRFAR using the ammonia provided by the HisH subunit. The polypeptide is Imidazole glycerol phosphate synthase subunit HisF (Kineococcus radiotolerans (strain ATCC BAA-149 / DSM 14245 / SRS30216)).